The sequence spans 259 residues: MRQKAIFKIAVLLAFIGLSLMVSSIQLKNVEAFSNQVIQRGASGEDVIELQSRLKYNGFYTGKVDGVFGWGTYWALRNFQEKFGLPVDGLAGAKTKQMLVKATKYDKSTANKGTTTNKGNSGGTAQENKPPQNKGTNVPNGYSQNDIQLMANAVYGESRGEPYLGQVAVAAVILNRVTSASFPNTVSGVIFEPRAFTAVADGQIYLTPNETAKKAVLDAINGWDPTGNALYYFNPDTATSKWIWTRPQIKKIGKHIFCK.

A signal peptide spans 1 to 32 (MRQKAIFKIAVLLAFIGLSLMVSSIQLKNVEA). Residues 109–142 (TANKGTTTNKGNSGGTAQENKPPQNKGTNVPNGY) form a disordered region. A compositionally biased stretch (low complexity) spans 110–125 (ANKGTTTNKGNSGGTA). Over residues 126–142 (QENKPPQNKGTNVPNGY) the composition is skewed to polar residues.

It belongs to the SleB family.

It is found in the forespore. Inhibited by HgCl(2). Activity is recovered by the addition of 2-mercaptoethanol. Functionally, probable N-acetylmuramyl-L-alanine amidase. Required for spore cortex hydrolysis during germination. May form a complex with some hydrophobic spore component, leading to a stabilization of the enzyme in a spore-bound form. The protein is Spore cortex-lytic enzyme (sleB) of Bacillus cereus.